Consider the following 72-residue polypeptide: Translation initiation factor IF-1 (72 aa).

One can recognise an S1-like domain in the interval Met1–Lys72.

This sequence belongs to the IF-1 family. As to quaternary structure, component of the 30S ribosomal translation pre-initiation complex which assembles on the 30S ribosome in the order IF-2 and IF-3, IF-1 and N-formylmethionyl-tRNA(fMet); mRNA recruitment can occur at any time during PIC assembly.

It is found in the cytoplasm. One of the essential components for the initiation of protein synthesis. Stabilizes the binding of IF-2 and IF-3 on the 30S subunit to which N-formylmethionyl-tRNA(fMet) subsequently binds. Helps modulate mRNA selection, yielding the 30S pre-initiation complex (PIC). Upon addition of the 50S ribosomal subunit IF-1, IF-2 and IF-3 are released leaving the mature 70S translation initiation complex. In Hydrogenovibrio crunogenus (strain DSM 25203 / XCL-2) (Thiomicrospira crunogena), this protein is Translation initiation factor IF-1.